The chain runs to 127 residues: Cliotide T3 (127 aa).

Residues 1 to 24 (MAYVRLTSLAVLFFLAASVMKTEG) form the signal peptide. The cyclopeptide (Gly-Asn) cross-link spans 25 to 53 (GLPTCGETCTLGTCYVPDCSCSWPICMKN). 3 cysteine pairs are disulfide-bonded: cysteine 29-cysteine 43, cysteine 33-cysteine 45, and cysteine 38-cysteine 50. The propeptide at 54–127 (HIIAANAKTV…DLKMPLESTN (74 aa)) is removed in mature form.

Post-translationally, contains 3 disulfide bonds. In terms of processing, this is a cyclic peptide. As to expression, expressed in flower, stem, shoot, leaf and seed but not in root, pod and nodule (at protein level).

Probably participates in a plant defense mechanism. Not active against Gram-negative bacteria E.coli ATCC 700926, K.pneumoniae ATTC 13883 and P.aeruginosa ATCC 39018 at concentration up to 100 uM. Has cytotoxic and hemolytic activity. This Clitoria ternatea (Butterfly pea) protein is Cliotide T3.